Reading from the N-terminus, the 392-residue chain is Chaperone protein DnaJ 2 (392 aa).

One can recognise a J domain in the interval 10 to 75 (DFYKELGVSS…AKRKEYDETR (66 aa)). The CR-type zinc finger occupies 161–239 (GVAMPLRLTS…CKGTGVTTRT (79 aa)). Residues Cys-174, Cys-177, Cys-191, Cys-194, Cys-213, Cys-216, Cys-227, and Cys-230 each contribute to the Zn(2+) site. 4 CXXCXGXG motif repeats span residues 174-181 (CTNCHGSG), 191-198 (CPTCNGSG), 213-220 (CTDCRGSG), and 227-234 (CDECKGTG).

The protein belongs to the DnaJ family. As to quaternary structure, homodimer. Requires Zn(2+) as cofactor.

The protein resides in the cytoplasm. In terms of biological role, participates actively in the response to hyperosmotic and heat shock by preventing the aggregation of stress-denatured proteins and by disaggregating proteins, also in an autonomous, DnaK-independent fashion. Unfolded proteins bind initially to DnaJ; upon interaction with the DnaJ-bound protein, DnaK hydrolyzes its bound ATP, resulting in the formation of a stable complex. GrpE releases ADP from DnaK; ATP binding to DnaK triggers the release of the substrate protein, thus completing the reaction cycle. Several rounds of ATP-dependent interactions between DnaJ, DnaK and GrpE are required for fully efficient folding. Also involved, together with DnaK and GrpE, in the DNA replication of plasmids through activation of initiation proteins. In Mycolicibacterium paratuberculosis (strain ATCC BAA-968 / K-10) (Mycobacterium paratuberculosis), this protein is Chaperone protein DnaJ 2.